A 272-amino-acid polypeptide reads, in one-letter code: Putative phosphoenolpyruvate synthase regulatory protein (272 aa).

152-159 (GVSRCGKT) is a binding site for ADP.

It belongs to the pyruvate, phosphate/water dikinase regulatory protein family. PSRP subfamily.

It catalyses the reaction [pyruvate, water dikinase] + ADP = [pyruvate, water dikinase]-phosphate + AMP + H(+). It carries out the reaction [pyruvate, water dikinase]-phosphate + phosphate + H(+) = [pyruvate, water dikinase] + diphosphate. Functionally, bifunctional serine/threonine kinase and phosphorylase involved in the regulation of the phosphoenolpyruvate synthase (PEPS) by catalyzing its phosphorylation/dephosphorylation. This chain is Putative phosphoenolpyruvate synthase regulatory protein, found in Pseudomonas savastanoi pv. phaseolicola (strain 1448A / Race 6) (Pseudomonas syringae pv. phaseolicola (strain 1448A / Race 6)).